The sequence spans 149 residues: Small ribosomal subunit protein uS13 (149 aa).

Belongs to the universal ribosomal protein uS13 family. Part of the 30S ribosomal subunit. Forms a loose heterodimer with protein S19. Forms two bridges to the 50S subunit in the 70S ribosome.

Located at the top of the head of the 30S subunit, it contacts several helices of the 16S rRNA. In the 70S ribosome it contacts the 23S rRNA (bridge B1a) and protein L5 of the 50S subunit (bridge B1b), connecting the 2 subunits; these bridges are implicated in subunit movement. The polypeptide is Small ribosomal subunit protein uS13 (Thermococcus kodakarensis (strain ATCC BAA-918 / JCM 12380 / KOD1) (Pyrococcus kodakaraensis (strain KOD1))).